The sequence spans 135 residues: P2Y purinoceptor 4 (135 aa).

A helical transmembrane segment spans residues 1–25; that stretch reads VHFSSSVMVLLFGLPFLVTLVCYGL. Over 26–49 the chain is Cytoplasmic; sequence MALRLCRPLPGAGQSSSRLRSLRT. A helical membrane pass occupies residues 50–72; the sequence is IAVVMTVFAVCLVPFHITRTIYY. At 73–90 the chain is on the extracellular side; that stretch reads LARLLKADCQILNIVNVV. A helical membrane pass occupies residues 91 to 112; the sequence is YKVTRPLASANSCLDPLLYLFT. Topologically, residues 113–135 are cytoplasmic; the sequence is GDKYRHQLQRLCRVSAPQRRITA.

This sequence belongs to the G-protein coupled receptor 1 family. In terms of tissue distribution, expressed in brain, heart, stria vascularis and vestibular labyrinth.

It is found in the cell membrane. Receptor for ATP and UTP coupled to G-proteins that activate a phosphatidylinositol-calcium second messenger system. Not activated by UDP. The polypeptide is P2Y purinoceptor 4 (P2RY4) (Meriones unguiculatus (Mongolian jird)).